The sequence spans 415 residues: Lipoyl synthase, mitochondrial (415 aa).

A mitochondrion-targeting transit peptide spans 1-33 (MAASTSHLRSLCSSTRSLSRSGVIVTPIACRGY). [4Fe-4S] cluster-binding residues include Cys132, Cys137, Cys143, Cys163, Cys167, Cys170, and Ser378. The Radical SAM core domain maps to 148-367 (DKSSATATIM…RQRALEMGFL (220 aa)).

It belongs to the radical SAM superfamily. Lipoyl synthase family. [4Fe-4S] cluster serves as cofactor.

The protein localises to the mitochondrion. It carries out the reaction [[Fe-S] cluster scaffold protein carrying a second [4Fe-4S](2+) cluster] + N(6)-octanoyl-L-lysyl-[protein] + 2 oxidized [2Fe-2S]-[ferredoxin] + 2 S-adenosyl-L-methionine + 4 H(+) = [[Fe-S] cluster scaffold protein] + N(6)-[(R)-dihydrolipoyl]-L-lysyl-[protein] + 4 Fe(3+) + 2 hydrogen sulfide + 2 5'-deoxyadenosine + 2 L-methionine + 2 reduced [2Fe-2S]-[ferredoxin]. Its pathway is protein modification; protein lipoylation via endogenous pathway; protein N(6)-(lipoyl)lysine from octanoyl-[acyl-carrier-protein]: step 2/2. Functionally, catalyzes the radical-mediated insertion of two sulfur atoms into the C-6 and C-8 positions of the octanoyl moiety bound to the lipoyl domains of lipoate-dependent enzymes, thereby converting the octanoylated domains into lipoylated derivatives. This is Lipoyl synthase, mitochondrial from Aspergillus clavatus (strain ATCC 1007 / CBS 513.65 / DSM 816 / NCTC 3887 / NRRL 1 / QM 1276 / 107).